The following is a 442-amino-acid chain: PTS system oligo-beta-mannoside-specific EIIC component (442 aa).

The PTS EIIC type-3 domain occupies 5 to 411 (ISQFLVPIAG…LIVFVIWFPF (407 aa)). The next 11 helical transmembrane spans lie at 28 to 48 (AFMLAFPLTIFGSIFVVLTNL), 67 to 87 (FGIASTATMGIMSVFVVFGIG), 97 to 117 (EAVFGGAIALVSFLLLTPFII), 138 to 157 (GMFLGMITAFLSGEIYRRIV), 177 to 197 (FAALIPAFITLTVFLLINVMV), 205 to 225 (MHDVIYHAIQAPLVGLGSGII), 228 to 248 (LIAVFFIQILWFFGLHGQIII), 286 to 306 (TVGMGGTGMTLAIVFTILIFM), 329 to 349 (PIIFGLPIVMNPIIIVPWVLA), 365 to 385 (LVPPPTGVTVPWTVPLFINGI), and 391 to 411 (IMGGVMQLINLLIVFVIWFPF).

The protein resides in the cell membrane. Functionally, the phosphoenolpyruvate-dependent sugar phosphotransferase system (sugar PTS), a major carbohydrate active transport system, catalyzes the phosphorylation of incoming sugar substrates concomitantly with their translocation across the cell membrane. The enzyme II GmuABC PTS system is involved in the transport of oligo-glucomannans such as cellobiose or mannobiose. The polypeptide is PTS system oligo-beta-mannoside-specific EIIC component (Bacillus subtilis (strain 168)).